The chain runs to 262 residues: ATP synthase subunit a (262 aa).

6 helical membrane-spanning segments follow: residues 50–70, 107–127, 141–161, 194–214, 218–238, and 239–259; these read TMIM…ACTK, MMPI…LGLI, FGLA…ANGV, LYGN…LINI, VFGG…VGFV, and QAFV…AHEA.

This sequence belongs to the ATPase A chain family. In terms of assembly, F-type ATPases have 2 components, CF(1) - the catalytic core - and CF(0) - the membrane proton channel. CF(1) has five subunits: alpha(3), beta(3), gamma(1), delta(1), epsilon(1). CF(0) has three main subunits: a(1), b(2) and c(9-12). The alpha and beta chains form an alternating ring which encloses part of the gamma chain. CF(1) is attached to CF(0) by a central stalk formed by the gamma and epsilon chains, while a peripheral stalk is formed by the delta and b chains.

The protein localises to the cell membrane. In terms of biological role, key component of the proton channel; it plays a direct role in the translocation of protons across the membrane. This Desulforamulus reducens (strain ATCC BAA-1160 / DSM 100696 / MI-1) (Desulfotomaculum reducens) protein is ATP synthase subunit a.